Here is a 788-residue protein sequence, read N- to C-terminus: Cadherin-10 (788 aa).

A signal peptide spans 1–22; the sequence is MTIHQFLLLFLFWVCLPHFCSP. A propeptide spanning residues 23 to 54 is cleaved from the precursor; that stretch reads EIMFRRTPVPQQRILSSRVPRSDGKILHRQKR. 5 consecutive Cadherin domains span residues 55–160, 161–269, 270–384, 385–487, and 488–606; these read GWMW…EPTF, PEEI…PPRF, PQNT…PPVF, SRSS…DNAP, and QFAV…LLLP. Residues 55–613 lie on the Extracellular side of the membrane; it reads GWMWNQFFLL…LLPAGLSTGA (559 aa). Asn-256 carries N-linked (GlcNAc...) asparagine glycosylation. Asn-438, Asn-456, and Asn-534 each carry an N-linked (GlcNAc...) asparagine glycan. A helical transmembrane segment spans residues 614–634; that stretch reads LIAILLCIIILLVIVVLFAAL. Residues 635-788 lie on the Cytoplasmic side of the membrane; the sequence is KRQRKKEPLI…YGGGESDKDS (154 aa). Phosphoserine is present on residues Ser-784 and Ser-788.

As to expression, predominantly expressed in brain. Also found in adult and fetal kidney. Very low levels detected in prostate and fetal lung.

Its subcellular location is the cell membrane. In terms of biological role, cadherins are calcium-dependent cell adhesion proteins. They preferentially interact with themselves in a homophilic manner in connecting cells; cadherins may thus contribute to the sorting of heterogeneous cell types. This Homo sapiens (Human) protein is Cadherin-10 (CDH10).